The sequence spans 145 residues: uncharacterized protein (145 aa).

Over residues 1 to 18 the composition is skewed to basic and acidic residues; that stretch reads MAEQQPSKEEKKEDKKDE. The segment at 1-61 is disordered; sequence MAEQQPSKEE…CTEGEWDASD (61 aa).

This is an uncharacterized protein from Caenorhabditis elegans.